Here is a 464-residue protein sequence, read N- to C-terminus: Aspartyl protease AED1 (464 aa).

Residues 1-25 (MSIMRNFLSMIIMLCVCLNWCFAEG) form the signal peptide. The Peptidase A1 domain occupies 132 to 460 (YIVTIGIGTP…DVAGGRVGFA (329 aa)). Residues Asp150 and Asp345 contribute to the active site. Cysteines 384 and 425 form a disulfide.

This sequence belongs to the peptidase A1 family.

It is found in the secreted. The protein localises to the extracellular space. The protein resides in the apoplast. In terms of biological role, aspartyl protease involved in a homeostatic feedback mechanism regulating systemic immunity. Has only mild or no influence on local defenses. Acts downstream of salicylic acid to suppress systemic immunity. The protein is Aspartyl protease AED1 of Arabidopsis thaliana (Mouse-ear cress).